A 190-amino-acid chain; its full sequence is Glutathione peroxidase 2 (190 aa).

The active site involves Sec-40. Position 40 (Sec-40) is a non-standard amino acid, selenocysteine.

This sequence belongs to the glutathione peroxidase family. As to quaternary structure, homotetramer. In terms of tissue distribution, mostly in liver and gastrointestinal tract, not found in heart or kidney.

Its subcellular location is the cytoplasm. The protein resides in the cytosol. It carries out the reaction 2 glutathione + H2O2 = glutathione disulfide + 2 H2O. It catalyses the reaction a hydroperoxy polyunsaturated fatty acid + 2 glutathione = a hydroxy polyunsaturated fatty acid + glutathione disulfide + H2O. The catalysed reaction is tert-butyl hydroperoxide + 2 glutathione = tert-butanol + glutathione disulfide + H2O. The enzyme catalyses cumene hydroperoxide + 2 glutathione = 2-phenylpropan-2-ol + glutathione disulfide + H2O. It carries out the reaction (13S)-hydroperoxy-(9Z,11E)-octadecadienoate + 2 glutathione = (13S)-hydroxy-(9Z,11E)-octadecadienoate + glutathione disulfide + H2O. It catalyses the reaction (5S)-hydroperoxy-(6E,8Z,11Z,14Z)-eicosatetraenoate + 2 glutathione = (5S)-hydroxy-(6E,8Z,11Z,14Z)-eicosatetraenoate + glutathione disulfide + H2O. The catalysed reaction is (12R)-hydroperoxy-(5Z,8Z,10E,14Z)-eicosatetraenoate + 2 glutathione = (12R)-hydroxy-(5Z,8Z,10E,14Z)-eicosatetraenoate + glutathione disulfide + H2O. The enzyme catalyses (15S)-hydroperoxy-(5Z,8Z,11Z,13E)-eicosatetraenoate + 2 glutathione = (15S)-hydroxy-(5Z,8Z,11Z,13E)-eicosatetraenoate + glutathione disulfide + H2O. Its function is as follows. Catalyzes the reduction of hydroperoxides in a glutathione-dependent manner thus regulating cellular redox homeostasis. Can reduce small soluble hydroperoxides such as H2O2, cumene hydroperoxide and tert-butyl hydroperoxide, as well as several fatty acid-derived hydroperoxides. Cannot reduce phosphatidycholine hydroperoxide. The protein is Glutathione peroxidase 2 of Homo sapiens (Human).